The sequence spans 221 residues: ATP phosphoribosyltransferase (221 aa).

It belongs to the ATP phosphoribosyltransferase family. Short subfamily. In terms of assembly, heteromultimer composed of HisG and HisZ subunits.

The protein localises to the cytoplasm. It carries out the reaction 1-(5-phospho-beta-D-ribosyl)-ATP + diphosphate = 5-phospho-alpha-D-ribose 1-diphosphate + ATP. It participates in amino-acid biosynthesis; L-histidine biosynthesis; L-histidine from 5-phospho-alpha-D-ribose 1-diphosphate: step 1/9. Catalyzes the condensation of ATP and 5-phosphoribose 1-diphosphate to form N'-(5'-phosphoribosyl)-ATP (PR-ATP). Has a crucial role in the pathway because the rate of histidine biosynthesis seems to be controlled primarily by regulation of HisG enzymatic activity. The protein is ATP phosphoribosyltransferase of Symbiobacterium thermophilum (strain DSM 24528 / JCM 14929 / IAM 14863 / T).